Reading from the N-terminus, the 376-residue chain is MNQAIRSVEYDRPQGTACSIGQAWAKVPDSPSTHERLALKERIRGLLKREKAVLVAHYYVDAELQELADETGGCVADSLEMARFGRDHDAQTLVVAGVRFMGETAKILSPNKRILMPDLDATCSLDLGCPVDEFSAFCDAHPDRIVVVYANTSAAVKARADWMVTSSIGLEIVADLHARGEKIIWAPDRHLGGYIQKKTGADMLLWQGSCLVHDEFKGVELDLLRAEYPDAKVLVHPESPESVVAQADVVGSTTQLIDAAKNSSATHFIVATDLGILHKMRIAAPGKTFIEAPTAGNSATCKSCAHCPWMAMNGLRNLAEVLERGHNEIFVDAAIGERARLPIDRMLDFAARHKKRVQASGDLAHDTALFSNVGAA.

Residues His57 and Ser78 each coordinate iminosuccinate. Cys123 lines the [4Fe-4S] cluster pocket. Iminosuccinate contacts are provided by residues 149 to 151 (YAN) and Ser166. Residue Cys210 participates in [4Fe-4S] cluster binding. Iminosuccinate contacts are provided by residues 236–238 (HPE) and Thr253. Cys307 is a [4Fe-4S] cluster binding site.

It belongs to the quinolinate synthase family. Type 1 subfamily. Requires [4Fe-4S] cluster as cofactor.

It localises to the cytoplasm. The catalysed reaction is iminosuccinate + dihydroxyacetone phosphate = quinolinate + phosphate + 2 H2O + H(+). It functions in the pathway cofactor biosynthesis; NAD(+) biosynthesis; quinolinate from iminoaspartate: step 1/1. Catalyzes the condensation of iminoaspartate with dihydroxyacetone phosphate to form quinolinate. The polypeptide is Quinolinate synthase (Paraburkholderia phymatum (strain DSM 17167 / CIP 108236 / LMG 21445 / STM815) (Burkholderia phymatum)).